Reading from the N-terminus, the 900-residue chain is Alanine--tRNA ligase (900 aa).

Residues His568, His572, Cys672, and His676 each coordinate Zn(2+).

It belongs to the class-II aminoacyl-tRNA synthetase family. Requires Zn(2+) as cofactor.

Its subcellular location is the cytoplasm. The catalysed reaction is tRNA(Ala) + L-alanine + ATP = L-alanyl-tRNA(Ala) + AMP + diphosphate. Functionally, catalyzes the attachment of alanine to tRNA(Ala) in a two-step reaction: alanine is first activated by ATP to form Ala-AMP and then transferred to the acceptor end of tRNA(Ala). Also edits incorrectly charged Ser-tRNA(Ala) and Gly-tRNA(Ala) via its editing domain. The polypeptide is Alanine--tRNA ligase (Mycoplasma genitalium (strain ATCC 33530 / DSM 19775 / NCTC 10195 / G37) (Mycoplasmoides genitalium)).